The sequence spans 222 residues: L-cystine transport system permease protein TcyL (222 aa).

The Periplasmic segment spans residues 1 to 22 (MQESIQLVIDSLPFLLKGAGYT). The ABC transmembrane type-1 domain occupies 19–207 (AGYTLQLSIG…IMATVLSTLQ (189 aa)). Residues 23 to 43 (LQLSIGGMFFGLLLGFILALM) traverse the membrane as a helical segment. Residues 44–64 (RLSPIWPVRWLARFYISIFRG) are Cytoplasmic-facing. A helical transmembrane segment spans residues 65–85 (TPLIAQLFMIYYGLPQFGIEL). At 86–182 (DPIPSAMIGL…RQAQLITSRT (97 aa)) the chain is on the periplasmic side. Residues 183–203 (LEVFTMYLAASLIYWIMATVL) traverse the membrane as a helical segment. The Cytoplasmic portion of the chain corresponds to 204-222 (STLQNHFENQLNRQEREPK).

Belongs to the binding-protein-dependent transport system permease family. HisMQ subfamily. As to quaternary structure, the complex is composed of two ATP-binding proteins (TcyN), two transmembrane proteins (TcyL) and a solute-binding protein (TcyJ).

The protein resides in the cell inner membrane. Its function is as follows. Part of the ABC transporter complex TcyJLN involved in L-cystine import. Responsible for the translocation of the substrate across the membrane. This Escherichia coli O6:H1 (strain CFT073 / ATCC 700928 / UPEC) protein is L-cystine transport system permease protein TcyL.